Reading from the N-terminus, the 74-residue chain is Kappa-stichotoxin-Shd5a (74 aa).

The N-terminal stretch at 1–22 (MKFQVIAAVLLIAFCLCVVVTA) is a signal peptide. The propeptide occupies 23–39 (RMELQDVEDVENGFQKR). In terms of domain architecture, ShKT spans 42–74 (CIDTIPQSRCTAFQCKHSMKYRLSFCRKTCGTC). Disulfide bonds link cysteine 42–cysteine 74, cysteine 51–cysteine 67, and cysteine 56–cysteine 71.

The protein belongs to the sea anemone type 1 potassium channel toxin family. Type 1a subfamily.

The protein localises to the secreted. Its subcellular location is the nematocyst. Functionally, inhibits voltage-gated potassium channels (Kv) with higher potency for Kv1.1/KCNA1 and Kv1.3/KCNA3. In Stichodactyla haddoni (Saddle carpet anemone), this protein is Kappa-stichotoxin-Shd5a.